The sequence spans 436 residues: 3-ketoacyl-CoA thiolase (436 aa).

Cys99 functions as the Acyl-thioester intermediate in the catalytic mechanism. Catalysis depends on proton acceptor residues His392 and Cys422.

It belongs to the thiolase-like superfamily. Thiolase family. As to quaternary structure, heterotetramer of two alpha chains (FadJ) and two beta chains (FadI).

Its subcellular location is the cytoplasm. It carries out the reaction an acyl-CoA + acetyl-CoA = a 3-oxoacyl-CoA + CoA. It participates in lipid metabolism; fatty acid beta-oxidation. Catalyzes the final step of fatty acid oxidation in which acetyl-CoA is released and the CoA ester of a fatty acid two carbons shorter is formed. This Shewanella baltica (strain OS155 / ATCC BAA-1091) protein is 3-ketoacyl-CoA thiolase.